We begin with the raw amino-acid sequence, 229 residues long: Ribonuclease S-6 (229 aa).

Residues 1-27 form the signal peptide; it reads MGITGMIYMVPMVFSLIVLISCSSTMG. Glutamine 36 is a binding site for RNA. Cysteine 42 and cysteine 49 are disulfide-bonded. Residue histidine 60 participates in RNA binding. The active-site Proton donor is the histidine 60. Cysteine 75 and cysteine 119 are disulfide-bonded. N-linked (GlcNAc) asparagine glycans are attached at residues asparagine 77 and asparagine 87. RNA contacts are provided by residues 98–99, phenylalanine 108, 111–112, and 115–116; these read NV, RQ, and KH. Glutamine 112 is a catalytic residue. The active-site Proton acceptor is histidine 116. Asparagine 145 carries an N-linked (GlcNAc...) (high mannose) asparagine glycan. Disulfide bonds link cysteine 184-cysteine 222 and cysteine 199-cysteine 210. Asparagine 188 is a glycosylation site (N-linked (GlcNAc) asparagine; alternate). Residues asparagine 188 and asparagine 203 are each glycosylated (N-linked (GlcNAc...) asparagine; alternate).

It belongs to the RNase T2 family. In terms of processing, the N-glycans attached at Asn-188 and Asn-203 consist of either monosaccharide (GlcNAc) or disaccharide (GlcNAc-GlcNAc) that could not be distinguished.

The enzyme catalyses a ribonucleotidyl-ribonucleotide-RNA + H2O = a 3'-end 3'-phospho-ribonucleotide-RNA + a 5'-end dephospho-ribonucleoside-RNA + H(+). Self-incompatibility (SI) is the inherited ability of a flowering plant to prevent self-fertilization by discriminating between self and non-self pollen during pollination. In many species, self-incompatibility is controlled by the single, multiallelic locus S. The protein is Ribonuclease S-6 of Pyrus pyrifolia (Chinese pear).